Consider the following 487-residue polypeptide: Transmembrane protein 161B (487 aa).

Asparagine 34 carries N-linked (GlcNAc...) asparagine glycosylation. The helical transmembrane segment at 107-127 (LVDFTVAATVVYLVTEVYYNF) threads the bilayer. A glycan (N-linked (GlcNAc...) asparagine) is linked at asparagine 135. The next 2 helical transmembrane spans lie at 136-156 (ISLV…FSLT) and 169-189 (SVCV…LIVT). An N-linked (GlcNAc...) asparagine glycan is attached at asparagine 203. The next 5 membrane-spanning stretches (helical) occupy residues 228-248 (FKFF…FPGL), 265-285 (ITQT…LLWV), 305-325 (LMTE…LCAL), 367-387 (VFYY…MLLH), and 459-479 (LSFL…FGLF).

Belongs to the TMEM161 family.

Its subcellular location is the cell membrane. Functionally, essential for maintaining normal cardiac rhythm in the developing heart and for neonatal survival. Inhibits potassium and calcium currents in the cardiomyocytes, this assists in timely action potential repolarization and thereby maintains normal cardiac rhythm. This chain is Transmembrane protein 161B (TMEM161B), found in Homo sapiens (Human).